A 427-amino-acid chain; its full sequence is Enolase (427 aa).

Gln-163 is a (2R)-2-phosphoglycerate binding site. The Proton donor role is filled by Glu-205. The Mg(2+) site is built by Asp-242, Glu-285, and Asp-312. Residues Lys-337, Arg-366, Ser-367, and Lys-388 each coordinate (2R)-2-phosphoglycerate. The Proton acceptor role is filled by Lys-337.

This sequence belongs to the enolase family. Requires Mg(2+) as cofactor.

The protein localises to the cytoplasm. The protein resides in the secreted. It localises to the cell surface. It catalyses the reaction (2R)-2-phosphoglycerate = phosphoenolpyruvate + H2O. The protein operates within carbohydrate degradation; glycolysis; pyruvate from D-glyceraldehyde 3-phosphate: step 4/5. In terms of biological role, catalyzes the reversible conversion of 2-phosphoglycerate (2-PG) into phosphoenolpyruvate (PEP). It is essential for the degradation of carbohydrates via glycolysis. The sequence is that of Enolase from Leptothrix cholodnii (strain ATCC 51168 / LMG 8142 / SP-6) (Leptothrix discophora (strain SP-6)).